Here is a 752-residue protein sequence, read N- to C-terminus: Ribonucleases P/MRP protein subunit popl-1 (752 aa).

A disordered region spans residues 638 to 663; it reads KTTKRKRVNRKKRESKKRRKIEQEKR. Residues 640–657 are compositionally biased toward basic residues; it reads TKRKRVNRKKRESKKRRK.

As to quaternary structure, component of nuclear RNase P and RNase MRP ribonucleoproteins. Several subunits of RNase P are also part of the RNase MRP complex.

It localises to the nucleus. The protein localises to the nucleolus. It carries out the reaction Endonucleolytic cleavage of RNA, removing 5'-extranucleotides from tRNA precursor.. Component of ribonuclease P, a ribonucleoprotein complex that generates mature tRNA molecules by cleaving their 5'-ends. Also a component of the MRP ribonuclease complex, which cleaves pre-rRNA sequences. This chain is Ribonucleases P/MRP protein subunit popl-1, found in Caenorhabditis elegans.